The sequence spans 307 residues: Aspartate carbamoyltransferase catalytic subunit (307 aa).

Carbamoyl phosphate is bound by residues R58 and T59. K86 contacts L-aspartate. The carbamoyl phosphate site is built by R108, H138, and Q141. L-aspartate contacts are provided by R171 and R223. Residues A264 and P265 each coordinate carbamoyl phosphate.

The protein belongs to the aspartate/ornithine carbamoyltransferase superfamily. ATCase family. Heterododecamer (2C3:3R2) of six catalytic PyrB chains organized as two trimers (C3), and six regulatory PyrI chains organized as three dimers (R2).

The enzyme catalyses carbamoyl phosphate + L-aspartate = N-carbamoyl-L-aspartate + phosphate + H(+). The protein operates within pyrimidine metabolism; UMP biosynthesis via de novo pathway; (S)-dihydroorotate from bicarbonate: step 2/3. Catalyzes the condensation of carbamoyl phosphate and aspartate to form carbamoyl aspartate and inorganic phosphate, the committed step in the de novo pyrimidine nucleotide biosynthesis pathway. This is Aspartate carbamoyltransferase catalytic subunit from Streptococcus suis (strain 98HAH33).